A 300-amino-acid chain; its full sequence is D-alanine--D-alanine ligase (300 aa).

The 195-residue stretch at 99-293 folds into the ATP-grasp domain; that stretch reads KKILKYANIN…FAELLNSIVK (195 aa). 126–181 serves as a coordination point for ATP; it reads IEKIGYPVFVKPNSGGSSVATNLVKDKEGIKEAVELALKYDKEVMIENYTKGEEIT. Mg(2+) is bound by residues aspartate 248, glutamate 260, and asparagine 262.

This sequence belongs to the D-alanine--D-alanine ligase family. Mg(2+) is required as a cofactor. The cofactor is Mn(2+).

It is found in the cytoplasm. The enzyme catalyses 2 D-alanine + ATP = D-alanyl-D-alanine + ADP + phosphate + H(+). Its pathway is cell wall biogenesis; peptidoglycan biosynthesis. In terms of biological role, cell wall formation. The chain is D-alanine--D-alanine ligase from Clostridium botulinum (strain Okra / Type B1).